An 895-amino-acid polypeptide reads, in one-letter code: Pentatricopeptide repeat-containing protein At1g74600, chloroplastic (895 aa).

Residues 1 to 71 constitute a chloroplast transit peptide; the sequence is MNCLANESLN…CNLRTTKILQ (71 aa). 22 PPR repeats span residues 83–113, 114–148, 149–183, 184–214, 215–249, 250–280, 284–314, 315–349, 350–384, 385–415, 417–451, 452–483, 484–514, 515–549, 550–584, 585–615, 616–650, 651–685, 686–716, 717–751, 752–787, and 788–818; these read DVFL…IPQP, DVVS…GFEA, NEIS…GYFF, YEVV…SLSA, NVYC…FQKP, DSYT…VIKC, DVFV…IPNP, SVVS…GVEI, NNCT…GFYL, DSSV…LDDI, RQNI…GLRT, DEFS…GLVL, DLTV…IPFK, DNAC…GTSP, DEST…GIDK, GMDL…LPEL, DPVS…GFTM, DSFA…GLCT, EPSV…INGP, DLIA…GFKP, DKVT…GIEP, and ENRH…MHIK. The interval 824-895 is type E motif; degenerate; sequence WGTLLAACKI…VQKEPGWSSV (72 aa).

Belongs to the PPR family. PCMP-E subfamily.

It localises to the plastid. It is found in the chloroplast. The protein is Pentatricopeptide repeat-containing protein At1g74600, chloroplastic (PCMP-E69) of Arabidopsis thaliana (Mouse-ear cress).